The chain runs to 256 residues: Small ribosomal subunit protein eS1 (256 aa).

Residues 1-18 show a composition bias toward basic residues; that stretch reads MAVGKNKRLSKGKKGLKK. Residues 1-22 form a disordered region; it reads MAVGKNKRLSKGKKGLKKKTQD. The residue at position 2 (Ala-2) is an N-acetylalanine; partial.

The protein belongs to the eukaryotic ribosomal protein eS1 family. In terms of assembly, component of the small ribosomal subunit. Mature ribosomes consist of a small (40S) and a large (60S) subunit. The 40S subunit contains about 33 different proteins and 1 molecule of RNA (18S). The 60S subunit contains about 49 different proteins and 3 molecules of RNA (25S, 5.8S and 5S).

It is found in the cytoplasm. This is Small ribosomal subunit protein eS1 from Pyricularia oryzae (strain Y34) (Rice blast fungus).